The chain runs to 196 residues: Peptidyl-tRNA hydrolase (196 aa).

TRNA is bound at residue H15. H20 (proton acceptor) is an active-site residue. TRNA is bound by residues Y66, N68, and N114.

This sequence belongs to the PTH family. Monomer.

It is found in the cytoplasm. The enzyme catalyses an N-acyl-L-alpha-aminoacyl-tRNA + H2O = an N-acyl-L-amino acid + a tRNA + H(+). Its function is as follows. Hydrolyzes ribosome-free peptidyl-tRNAs (with 1 or more amino acids incorporated), which drop off the ribosome during protein synthesis, or as a result of ribosome stalling. Catalyzes the release of premature peptidyl moieties from peptidyl-tRNA molecules trapped in stalled 50S ribosomal subunits, and thus maintains levels of free tRNAs and 50S ribosomes. This chain is Peptidyl-tRNA hydrolase, found in Polynucleobacter necessarius subsp. necessarius (strain STIR1).